A 215-amino-acid chain; its full sequence is UPF0502 protein YceH (215 aa).

The protein belongs to the UPF0502 family.

This is UPF0502 protein YceH from Salmonella paratyphi B (strain ATCC BAA-1250 / SPB7).